A 704-amino-acid polypeptide reads, in one-letter code: Ion-translocating oxidoreductase complex subunit C (704 aa).

2 consecutive 4Fe-4S ferredoxin-type domains span residues 368-397 and 407-436; these read MGAP…QQLY and KATA…VQYF. [4Fe-4S] cluster is bound by residues cysteine 377, cysteine 380, cysteine 383, cysteine 387, cysteine 416, cysteine 419, cysteine 422, and cysteine 426. The segment at 534-682 is disordered; it reads QARAKQAAHP…AEPADPRKAA (149 aa).

It belongs to the 4Fe4S bacterial-type ferredoxin family. RnfC subfamily. The complex is composed of six subunits: RsxA, RsxB, RsxC, RsxD, RsxE and RsxG. Requires [4Fe-4S] cluster as cofactor.

The protein resides in the cell inner membrane. Part of a membrane-bound complex that couples electron transfer with translocation of ions across the membrane. Required to maintain the reduced state of SoxR. This chain is Ion-translocating oxidoreductase complex subunit C, found in Salmonella enteritidis PT4 (strain P125109).